The sequence spans 367 residues: 2-aminoethylphosphonate--pyruvate transaminase (367 aa).

An N6-(pyridoxal phosphate)lysine modification is found at K193.

It belongs to the class-V pyridoxal-phosphate-dependent aminotransferase family. PhnW subfamily. As to quaternary structure, homodimer. Pyridoxal 5'-phosphate is required as a cofactor.

It carries out the reaction (2-aminoethyl)phosphonate + pyruvate = phosphonoacetaldehyde + L-alanine. Its function is as follows. Involved in phosphonate degradation. The protein is 2-aminoethylphosphonate--pyruvate transaminase of Vibrio cholerae serotype O1 (strain ATCC 39541 / Classical Ogawa 395 / O395).